Reading from the N-terminus, the 102-residue chain is Virulence plasmid protein pGP4-D (102 aa).

This is Virulence plasmid protein pGP4-D from Chlamydia trachomatis serovar L2 (strain ATCC VR-902B / DSM 19102 / 434/Bu).